Reading from the N-terminus, the 882-residue chain is Alanine--tRNA ligase (882 aa).

The Zn(2+) site is built by His567, His571, Cys669, and His673.

This sequence belongs to the class-II aminoacyl-tRNA synthetase family. Requires Zn(2+) as cofactor.

It localises to the cytoplasm. The catalysed reaction is tRNA(Ala) + L-alanine + ATP = L-alanyl-tRNA(Ala) + AMP + diphosphate. In terms of biological role, catalyzes the attachment of alanine to tRNA(Ala) in a two-step reaction: alanine is first activated by ATP to form Ala-AMP and then transferred to the acceptor end of tRNA(Ala). Also edits incorrectly charged Ser-tRNA(Ala) and Gly-tRNA(Ala) via its editing domain. This Thermosynechococcus vestitus (strain NIES-2133 / IAM M-273 / BP-1) protein is Alanine--tRNA ligase.